The following is a 386-amino-acid chain: Probable dual-specificity RNA methyltransferase RlmN (386 aa).

Glutamate 123 acts as the Proton acceptor in catalysis. One can recognise a Radical SAM core domain in the interval 129 to 372 (YPTRTTLCIS…ATLRDTRGQD (244 aa)). A disulfide bridge connects residues cysteine 136 and cysteine 377. [4Fe-4S] cluster contacts are provided by cysteine 143, cysteine 147, and cysteine 150. S-adenosyl-L-methionine contacts are provided by residues 198 to 199 (GE), serine 232, 255 to 257 (SLH), and asparagine 334. Cysteine 377 (S-methylcysteine intermediate) is an active-site residue.

It belongs to the radical SAM superfamily. RlmN family. Requires [4Fe-4S] cluster as cofactor.

The protein resides in the cytoplasm. It carries out the reaction adenosine(2503) in 23S rRNA + 2 reduced [2Fe-2S]-[ferredoxin] + 2 S-adenosyl-L-methionine = 2-methyladenosine(2503) in 23S rRNA + 5'-deoxyadenosine + L-methionine + 2 oxidized [2Fe-2S]-[ferredoxin] + S-adenosyl-L-homocysteine. The catalysed reaction is adenosine(37) in tRNA + 2 reduced [2Fe-2S]-[ferredoxin] + 2 S-adenosyl-L-methionine = 2-methyladenosine(37) in tRNA + 5'-deoxyadenosine + L-methionine + 2 oxidized [2Fe-2S]-[ferredoxin] + S-adenosyl-L-homocysteine. Specifically methylates position 2 of adenine 2503 in 23S rRNA and position 2 of adenine 37 in tRNAs. The chain is Probable dual-specificity RNA methyltransferase RlmN from Bifidobacterium adolescentis (strain ATCC 15703 / DSM 20083 / NCTC 11814 / E194a).